A 102-amino-acid polypeptide reads, in one-letter code: uncharacterized protein (102 aa).

Residues methionine 1 to glycine 19 form the signal peptide.

This is an uncharacterized protein from Saccharomyces cerevisiae (strain ATCC 204508 / S288c) (Baker's yeast).